We begin with the raw amino-acid sequence, 226 residues long: Type-5 uracil-DNA glycosylase (226 aa).

4 residues coordinate [4Fe-4S] cluster: C23, C26, C125, and C140.

The protein belongs to the uracil-DNA glycosylase (UDG) superfamily. Type 5 (UDGb) family.

Functionally, DNA glycosylase with broad substrate specificity. Can remove uracil from double-stranded DNA containing either a U/G or U/A base pair. Can also process hydroxymethyluracil (mispaired with guanine or adenine), hypoxanthine and fluorouracil. Exhibits a clear preference for double-stranded DNA substrates, but can also process uracil in single-stranded DNA, with lower efficiency. The polypeptide is Type-5 uracil-DNA glycosylase (Pyrobaculum aerophilum (strain ATCC 51768 / DSM 7523 / JCM 9630 / CIP 104966 / NBRC 100827 / IM2)).